A 262-amino-acid polypeptide reads, in one-letter code: MVKVSFNSALAHKEAANKEEENSQVLILPPDAKEPEDVVVPAGHKRAWCWCMCFGLAFMLAGVILGGAYLYKYFAFQQGGVYFCGIKYIEDGLSLPESGAQLKSARYHTIEQNIQILEEEDVEFISVPVPEFADSDPADIVHDFHRRLTAYLDLSLDKCYVIPLNTSVVMPPKNFLELLINIKAGTYLPQSYLIHEQMIVTDRIENVDQLGFFIYRLCRGKETYKLQRKEAMKGIQKREAVNCRKIRHFENRFAMETLICEQ.

Residues 1–49 (MVKVSFNSALAHKEAANKEEENSQVLILPPDAKEPEDVVVPAGHKRAWC) lie on the Cytoplasmic side of the membrane. A helical; Signal-anchor for type II membrane protein membrane pass occupies residues 50–70 (WCMCFGLAFMLAGVILGGAYL). Residues 71-262 (YKYFAFQQGG…FAMETLICEQ (192 aa)) lie on the Lumenal side of the membrane. A BRICHOS domain is found at 132-226 (FADSDPADIV…LCRGKETYKL (95 aa)). 2 disulfide bridges follow: Cys-159–Cys-218 and Cys-243–Cys-260. Residue Asn-165 is glycosylated (N-linked (GlcNAc...) asparagine).

This sequence belongs to the ITM2 family. Homodimer; disulfide-linked. Expressed in areas of chondro-osteogenic transition and widely in the nervous system.

The protein localises to the golgi apparatus membrane. Its subcellular location is the cell membrane. It localises to the endosome membrane. Its function is as follows. Plays a role in the induction of neurite outgrowth. The polypeptide is Integral membrane protein 2B (ITM2B) (Gallus gallus (Chicken)).